Here is a 412-residue protein sequence, read N- to C-terminus: POU domain, class 4, transcription factor 2 (412 aa).

Positions 29-96 (LHSASPGSSA…SEAMRRACLP (68 aa)) are disordered. Residues 31–53 (SASPGSSAPAAPSASSPSSSSNA) are compositionally biased toward low complexity. 2 stretches are compositionally biased toward gly residues: residues 54–70 (GSGG…GGGR) and 78–87 (GSGGGGGGGS). Residues 94 to 240 (CLPTPPSNIF…MHQAALSMAH (147 aa)) are required for transcriptional activation. A POU-IV box motif is present at residues 113 to 122 (RAEALAAVDI). The segment at 123-191 (VSQSKSHHHH…HHHHQPHQAL (69 aa)) is disordered. Residues 127–138 (KSHHHHPPHHSP) show a composition bias toward basic residues. The segment covering 152–169 (PCTSAASSSSVPISHPSA) has biased composition (low complexity). Residues 173–187 (THHHHHHHHHHHHQP) are compositionally biased toward basic residues. The short motif at 174–188 (HHHHHHHHHHHHQPH) is the Nuclear speckle targeting signal element. The segment at 241 to 412 (AHGLPSHMGC…QKRMKYSAGI (172 aa)) is required for DNA-binding and transcriptional repression. Residues 253–330 (DVDADPRDLE…ILQAWLEEAE (78 aa)) enclose the POU-specific domain. Positions 348–407 (KKRKRTSIAAPEKRSLEAYFAIQPRPSSEKIAAIAEKLDLKKNVVRVWFCNQRQKQKRMK) form a DNA-binding region, homeobox.

Belongs to the POU transcription factor family. Class-4 subfamily. Interacts with POU4F1; this interaction inhibits both POU4F1 DNA-binding and transcriptional activities. Interacts (C-terminus) with ESR1 (via DNA-binding domain); this interaction increases the estrogen receptor ESR1 transcriptional activity in a DNA- and ligand 17-beta-estradiol-independent manner. Interacts (via C-terminus) with TP53 (via N-terminus). Interacts with DLX1 (via homeobox DNA-binding domain); this interaction suppresses DLX1-mediated transcriptional activity in postnatal retina enhancing retinal ganglion cell (RGC) differentiation. Interacts with DLX2 (via homeobox DNA-binding domain); this interaction enhances RGC differentiation. Interacts (via C-terminus) with ISL1 (via C-terminus). Interacts with ISL2. Interacts with LHX2. Expressed in the heart, brain and spinal cord. Expressed in cardiomyocytes (at protein level). Expressed in brain and spinal cord. Expressed in dorsal root ganglion (RGD) neurons.

Its subcellular location is the nucleus. The protein resides in the nucleus speckle. The protein localises to the cytoplasm. Tissue-specific DNA-binding transcription factor involved in the development and differentiation of target cells. Functions either as activator or repressor modulating the rate of target gene transcription through RNA polymerase II enzyme in a promoter-dependent manner. Binds to the consensus octamer motif 5'-AT[A/T]A[T/A]T[A/T]A-3' of promoter of target genes. Plays a fundamental role in the gene regulatory network essential for retinal ganglion cell (RGC) differentiation. Binds to an octamer site to form a ternary complex with ISL1; cooperates positively with ISL1 and ISL2 to potentiate transcriptional activation of RGC target genes being involved in RGC fate commitment in the developing retina and RGC axon formation and pathfinding. Inhibits DLX1 and DLX2 transcriptional activities preventing DLX1- and DLX2-mediated ability to promote amacrine cell fate specification. In cooperation with TP53 potentiates transcriptional activation of BAX promoter activity increasing neuronal cell apoptosis. Negatively regulates BAX promoter activity in the absence of TP53. Acts as a transcriptional coactivator via its interaction with the transcription factor ESR1 by enhancing its effect on estrogen response element (ERE)-containing promoter. Antagonizes the transcriptional stimulatory activity of POU4F1 by preventing its binding to an octamer motif. Involved in TNFSF11-mediated terminal osteoclast differentiation. In Rattus norvegicus (Rat), this protein is POU domain, class 4, transcription factor 2.